Reading from the N-terminus, the 727-residue chain is Translation initiation factor IF-2, mitochondrial (727 aa).

A mitochondrion-targeting transit peptide spans 1 to 29 (MNQKLLKLENLLRFHTIYRQLHSLCQRRA). A tr-type G domain is found at 178–348 (PRSPVVTIMG…VALAEMLELK (171 aa)). The interval 187–194 (GHVDHGKT) is G1. 187–194 (GHVDHGKT) is a GTP binding site. The tract at residues 212-216 (GITQH) is G2. Residues 234 to 237 (DTPG) and 288 to 291 (NKCD) each bind GTP. The tract at residues 234 to 237 (DTPG) is G3. Residues 288 to 291 (NKCD) form a G4 region. Residues 324–326 (SAL) are G5. Thr-688 carries the post-translational modification Phosphothreonine.

This sequence belongs to the TRAFAC class translation factor GTPase superfamily. Classic translation factor GTPase family. IF-2 subfamily. As to quaternary structure, monomer. In terms of tissue distribution, expressed in all tissues examined. Highest level in skeletal muscle.

The protein resides in the mitochondrion. Functionally, one of the essential components for the initiation of protein synthesis. Protects formylmethionyl-tRNA from spontaneous hydrolysis and promotes its binding to the 30S ribosomal subunits. Also involved in the hydrolysis of GTP during the formation of the 70S ribosomal complex. The sequence is that of Translation initiation factor IF-2, mitochondrial (MTIF2) from Homo sapiens (Human).